A 64-amino-acid chain; its full sequence is Large ribosomal subunit protein bL35 (64 aa).

The interval 1-22 (MPKAKTHSGASKRFRRTGTGKI) is disordered.

This sequence belongs to the bacterial ribosomal protein bL35 family.

The chain is Large ribosomal subunit protein bL35 from Mycobacterium tuberculosis (strain ATCC 25177 / H37Ra).